Here is a 154-residue protein sequence, read N- to C-terminus: 8-oxo-dGTP diphosphatase (154 aa).

The 129-residue stretch at 1–129 (MPQLATICYI…DHTFVEWLLE (129 aa)) folds into the Nudix hydrolase domain. 4 residues coordinate Mg(2+): glycine 38, glutamate 53, glutamate 56, and glutamate 57. The short motif at 38-59 (GKLERGETPQECAAREILEETG) is the Nudix box element.

It belongs to the Nudix hydrolase family. As to quaternary structure, homotrimer. Mg(2+) serves as cofactor.

The enzyme catalyses 8-oxo-dGTP + H2O = 8-oxo-dGMP + diphosphate + H(+). Functionally, involved in the DNA repair system to avoid A.T to G.C transversions. Degrades 8-oxo-dGTP to the monophosphate, but is also active on all of the nucleoside triphosphates. In Streptococcus pneumoniae serotype 4 (strain ATCC BAA-334 / TIGR4), this protein is 8-oxo-dGTP diphosphatase (mutX).